The primary structure comprises 148 residues: Arginine repressor (148 aa).

This sequence belongs to the ArgR family.

It is found in the cytoplasm. It participates in amino-acid biosynthesis; L-arginine biosynthesis [regulation]. Its function is as follows. Regulates arginine biosynthesis genes. This is Arginine repressor from Chloroherpeton thalassium (strain ATCC 35110 / GB-78).